We begin with the raw amino-acid sequence, 42 residues long: Putative protein RNF216-like (42 aa).

The protein is Putative protein RNF216-like (RNF216P1) of Homo sapiens (Human).